Consider the following 557-residue polypeptide: MAKFVFVTGGVVSSIGKGIVAASLGRLLKSRGYSVSILKLDPYLNVDPGTMSPFQHGEVFVTEDGAETDLDLGHYERFTDTAMSRLNSVTTGSIYQSVINKERRGSYNGGTVQVIPHITGEIRDRIHRVASNSNADVVITEIGGTVGDIESLPFLEAIREFRGDVGRQDLAYIHVTLLPFIGTSGELKTKPTQHSVKELRSIGIQPDLLVCRSDRDINDELKRKIGGFCGVPQRAVIPSLDADSIYAVPLTLEDEGLCREVLDVLDLEDHDSDMVDWAQLVHKLRNPGPAVKVALVGKYVQLNDAYLSVVEALRHACLAQDASLDLHWVCAEEIENQGADVLLKGMDAVVVPGGFGNRGVDGKVAAIRWAREQRVPFLGLCLGMQCAVIEWARNLAGLTDATSAELEPGTTHPVIHLLPEQQDVVDLGGTMRLGVYPCRVSAGSLASRLYGEEVVYERHRHRFEFNNAYRNLFLESGYEISGSSPDGRLVELIELPEHPFFTACQYHPEFLSRPGRPHPLFRGLIEAAQQRLPCSPSEAMRQQNNSAAGSSHPSLQP.

Residues 1–267 (MAKFVFVTGG…CREVLDVLDL (267 aa)) form an amidoligase domain region. Residue serine 13 participates in CTP binding. Serine 13 contacts UTP. Residues 14 to 19 (SIGKGI) and aspartate 71 contribute to the ATP site. Positions 71 and 141 each coordinate Mg(2+). Residues 148 to 150 (DIE), 188 to 193 (KTKPTQ), and lysine 224 each bind CTP. UTP contacts are provided by residues 188 to 193 (KTKPTQ) and lysine 224. The region spanning 292-534 (KVALVGKYVQ…IEAAQQRLPC (243 aa)) is the Glutamine amidotransferase type-1 domain. Glycine 354 contacts L-glutamine. Catalysis depends on cysteine 381, which acts as the Nucleophile; for glutamine hydrolysis. L-glutamine contacts are provided by residues 382 to 385 (LGMQ), glutamate 405, and arginine 462. Active-site residues include histidine 507 and glutamate 509. The segment at 532–557 (LPCSPSEAMRQQNNSAAGSSHPSLQP) is disordered. The span at 540-557 (MRQQNNSAAGSSHPSLQP) shows a compositional bias: polar residues.

Belongs to the CTP synthase family. As to quaternary structure, homotetramer.

It carries out the reaction UTP + L-glutamine + ATP + H2O = CTP + L-glutamate + ADP + phosphate + 2 H(+). The catalysed reaction is L-glutamine + H2O = L-glutamate + NH4(+). The enzyme catalyses UTP + NH4(+) + ATP = CTP + ADP + phosphate + 2 H(+). It functions in the pathway pyrimidine metabolism; CTP biosynthesis via de novo pathway; CTP from UDP: step 2/2. With respect to regulation, allosterically activated by GTP, when glutamine is the substrate; GTP has no effect on the reaction when ammonia is the substrate. The allosteric effector GTP functions by stabilizing the protein conformation that binds the tetrahedral intermediate(s) formed during glutamine hydrolysis. Inhibited by the product CTP, via allosteric rather than competitive inhibition. Its function is as follows. Catalyzes the ATP-dependent amination of UTP to CTP with either L-glutamine or ammonia as the source of nitrogen. Regulates intracellular CTP levels through interactions with the four ribonucleotide triphosphates. This is CTP synthase from Synechococcus sp. (strain CC9311).